The following is a 362-amino-acid chain: 45 kDa calcium-binding protein (362 aa).

A signal peptide spans 1 to 36; it reads MVWPWVAMASRWGPLIGLAPCCLWLLGAVLLMDASA. The N-linked (GlcNAc...) asparagine glycan is linked to asparagine 40. EF-hand domains are found at residues 98 to 133 and 137 to 172; these read RSRR…KTAE and EAME…SKGH. Position 99 is a phosphoserine (serine 99). Residues aspartate 111, asparagine 113, aspartate 115, lysine 117, glutamate 122, aspartate 150, aspartate 152, aspartate 154, histidine 156, and glutamate 161 each contribute to the Ca(2+) site. At threonine 193 the chain carries Phosphothreonine. EF-hand domains are found at residues 197–232, 233–268, 278–313, and 314–349; these read LENL…HSRG, MLRF…TVEN, WVKD…MNEY, and NALN…FTGS. Aspartate 213 serves as a coordination point for Ca(2+). Threonine 217 is subject to Phosphothreonine. Ca(2+)-binding residues include glutamate 220, aspartate 246, aspartate 248, aspartate 250, glutamine 252, and glutamate 257. Residue threonine 265 is modified to Phosphothreonine. Positions 291, 293, and 295 each coordinate Ca(2+). A Phosphothreonine modification is found at threonine 299. Residues glutamate 302, aspartate 327, asparagine 329, asparagine 331, histidine 333, and glutamate 338 each coordinate Ca(2+). The interval 309 to 362 is necessary for intracellular retention in Golgi apparatus lumen; that stretch reads PMNEYNALNEAKQMIAVADENQNHHLEPEEVLKYSEFFTGSKLVDYARSVHEEF.

Belongs to the CREC family. Isoform 5 interacts with STXBP1; the interaction is enhanced in presence of calcium. Isoform 5 interacts with STX3. In terms of tissue distribution, ubiquitous. Isoform 5 is expressed in pancreas.

The protein localises to the golgi apparatus lumen. It is found in the cytoplasm. Its subcellular location is the cell membrane. It localises to the cell projection. The protein resides in the bleb. May regulate calcium-dependent activities in the endoplasmic reticulum lumen or post-ER compartment. Its function is as follows. Isoform 5 may be involved in the exocytosis of zymogens by pancreatic acini. The chain is 45 kDa calcium-binding protein (SDF4) from Homo sapiens (Human).